Here is a 277-residue protein sequence, read N- to C-terminus: Secoisolariciresinol dehydrogenase (277 aa).

NAD(+) contacts are provided by residues 24 to 29 (GGASGI), D48, V73, and N99. S163 is a substrate binding site. Residue Y166 is the Proton donor/acceptor of the active site. NAD(+) is bound at residue K170.

The protein belongs to the short-chain dehydrogenases/reductases (SDR) family. As to quaternary structure, homotetramer.

It catalyses the reaction (-)-secoisolariciresinol + 2 NAD(+) = (-)-matairesinol + 2 NADH + 2 H(+). Oxidoreductase involved in lignan biosynthesis. Catalyzes the stereospecific conversion of (-)-secoisolariciresinol to (-)-matairesinol via a lactol intermediate. The protein is Secoisolariciresinol dehydrogenase of Forsythia intermedia (Border forsythia).